We begin with the raw amino-acid sequence, 471 residues long: Protein naked cuticle homolog 1 (471 aa).

Disordered regions lie at residues 1-23 (MGKL…GDSF) and 41-82 (QRCP…DEDD). Glycine 2 is lipidated: N-myristoyl glycine. Positions 62–75 (GTRELVGDTSREAL) are enriched in basic and acidic residues. The segment at 125–190 (QCDVSVEEDS…LRVKLTVAPD (66 aa)) is interaction with DVL1, DVL2 and DVL3. The region spanning 131–166 (EEDSRQEWTFTLYDFDNNGKVTREDITSLLHTIYEV) is the EF-hand domain. The Ca(2+) site is built by aspartate 144, aspartate 146, asparagine 148, lysine 150, and aspartate 155. 3 disordered regions span residues 273 to 314 (GPGS…QGVD), 337 to 382 (GTQD…SPSA), and 448 to 471 (QAVQ…FYQP). Over residues 453–471 (HEHHHHHEHHHHYHHFYQP) the composition is skewed to basic residues.

The protein belongs to the NKD family. Interacts with DVL1, DVL2, DVL3 and PPP2R3A. Highly expressed in lung. Also expressed in brain, heart, kidney, liver, skin, stomach and testis. Within the testis expression is found in the seminiferous epithelium and round and elongating spermatids.

It is found in the cell membrane. Its subcellular location is the cytoplasm. In terms of biological role, cell autonomous antagonist of the canonical Wnt signaling pathway. May activate a second Wnt signaling pathway that controls planar cell polarity. Required for spermatogenesis. The polypeptide is Protein naked cuticle homolog 1 (Nkd1) (Mus musculus (Mouse)).